Reading from the N-terminus, the 293-residue chain is Elongation factor Ts (293 aa).

The segment at Thr79–Val82 is involved in Mg(2+) ion dislocation from EF-Tu.

This sequence belongs to the EF-Ts family.

Its subcellular location is the cytoplasm. Associates with the EF-Tu.GDP complex and induces the exchange of GDP to GTP. It remains bound to the aminoacyl-tRNA.EF-Tu.GTP complex up to the GTP hydrolysis stage on the ribosome. The sequence is that of Elongation factor Ts from Bacillus pumilus (strain SAFR-032).